The sequence spans 77 residues: Translation initiation factor IF-1, chloroplastic (77 aa).

Residues 1–71 (MKEQKLIHEG…TRGRIIYRLR (71 aa)) enclose the S1-like domain.

It belongs to the IF-1 family. In terms of assembly, component of the 30S ribosomal translation pre-initiation complex which assembles on the 30S ribosome in the order IF-2 and IF-3, IF-1 and N-formylmethionyl-tRNA(fMet); mRNA recruitment can occur at any time during PIC assembly.

The protein resides in the plastid. The protein localises to the chloroplast. Functionally, one of the essential components for the initiation of protein synthesis. Stabilizes the binding of IF-2 and IF-3 on the 30S subunit to which N-formylmethionyl-tRNA(fMet) subsequently binds. Helps modulate mRNA selection, yielding the 30S pre-initiation complex (PIC). Upon addition of the 50S ribosomal subunit IF-1, IF-2 and IF-3 are released leaving the mature 70S translation initiation complex. This is Translation initiation factor IF-1, chloroplastic from Liriodendron tulipifera (Tuliptree).